A 479-amino-acid chain; its full sequence is Monodehydroascorbate reductase 1, peroxisomal (479 aa).

At 1–3 the chain is on the cytoplasmic side; it reads MGR. Residues 4 to 24 form a helical membrane-spanning segment; it reads AFEYVILGGGVAAGYAALEFV. FAD is bound by residues 12-15, E41, R48, K53, and 147-148; these read GGVA and RN. Over 25-445 the chain is Peroxisomal; sequence RRNGGASSQE…QATGGGGKPT (421 aa). NAD(+) is bound by residues 172 to 178, R202, and G260; that span reads GGYIGME. NADP(+) is bound by residues 174-178, R202, and G260; that span reads YIGME. D297 serves as a coordination point for FAD. An NAD(+)-binding site is contributed by 314–315; the sequence is EH. NADP(+) is bound at residue 314-315; sequence EH. V316 lines the FAD pocket. R320 is an L-ascorbate binding site. Y347 is a binding site for FAD. Position 347 (Y347) interacts with NAD(+). Position 347 (Y347) interacts with NADP(+). Residue R349 participates in L-ascorbate binding. Residues 446–466 form a helical membrane-spanning segment; the sequence is CAWHATVGVAAAVSIAAFACW. Over 467-479 the chain is Cytoplasmic; that stretch reads YGWQAPYVLKRDF.

Belongs to the FAD-dependent oxidoreductase family. It depends on FAD as a cofactor.

The protein resides in the peroxisome membrane. The catalysed reaction is 2 monodehydro-L-ascorbate radical + NADH + H(+) = 2 L-ascorbate + NAD(+). Its function is as follows. Catalyzes the conversion of monodehydroascorbate to ascorbate, oxidizing NADH in the process. Ascorbate is a major antioxidant against reactive oxygen species (ROS) and nitric oxide (NO). In Oryza sativa subsp. japonica (Rice), this protein is Monodehydroascorbate reductase 1, peroxisomal.